A 328-amino-acid polypeptide reads, in one-letter code: Tryptophan--tRNA ligase (328 aa).

ATP contacts are provided by residues 9-11 (QPS) and 17-18 (GN). A 'HIGH' region motif is present at residues 10 to 18 (PSGVITIGN). Residue Asp132 coordinates L-tryptophan. ATP-binding positions include 144–146 (GED), Ile183, and 192–196 (KMSKS). Positions 192–196 (KMSKS) match the 'KMSKS' region motif.

The protein belongs to the class-I aminoacyl-tRNA synthetase family. As to quaternary structure, homodimer.

The protein resides in the cytoplasm. The catalysed reaction is tRNA(Trp) + L-tryptophan + ATP = L-tryptophyl-tRNA(Trp) + AMP + diphosphate + H(+). With respect to regulation, inhibited by indolmycin, a competitive inhibitor for tryptophan. In terms of biological role, catalyzes the attachment of tryptophan to tRNA(Trp). This is Tryptophan--tRNA ligase from Geobacillus stearothermophilus (Bacillus stearothermophilus).